A 134-amino-acid polypeptide reads, in one-letter code: Putative nickel-responsive regulator (134 aa).

His78, His89, His91, and Cys97 together coordinate Ni(2+).

The protein belongs to the transcriptional regulatory CopG/NikR family. It depends on Ni(2+) as a cofactor.

In terms of biological role, transcriptional regulator. In Chlorobaculum tepidum (strain ATCC 49652 / DSM 12025 / NBRC 103806 / TLS) (Chlorobium tepidum), this protein is Putative nickel-responsive regulator.